The following is a 236-amino-acid chain: Phosphoribosylaminoimidazole-succinocarboxamide synthase (236 aa).

Belongs to the SAICAR synthetase family.

The catalysed reaction is 5-amino-1-(5-phospho-D-ribosyl)imidazole-4-carboxylate + L-aspartate + ATP = (2S)-2-[5-amino-1-(5-phospho-beta-D-ribosyl)imidazole-4-carboxamido]succinate + ADP + phosphate + 2 H(+). Its pathway is purine metabolism; IMP biosynthesis via de novo pathway; 5-amino-1-(5-phospho-D-ribosyl)imidazole-4-carboxamide from 5-amino-1-(5-phospho-D-ribosyl)imidazole-4-carboxylate: step 1/2. The polypeptide is Phosphoribosylaminoimidazole-succinocarboxamide synthase (Campylobacter jejuni (strain RM1221)).